The following is a 388-amino-acid chain: Chorismate synthase (388 aa).

2 residues coordinate NADP(+): Arg39 and Arg45. FMN is bound by residues 130–132 (RSS), 251–252 (NA), Gly296, 311–315 (KPIPT), and Arg337.

The protein belongs to the chorismate synthase family. As to quaternary structure, homotetramer. FMNH2 is required as a cofactor.

It catalyses the reaction 5-O-(1-carboxyvinyl)-3-phosphoshikimate = chorismate + phosphate. It participates in metabolic intermediate biosynthesis; chorismate biosynthesis; chorismate from D-erythrose 4-phosphate and phosphoenolpyruvate: step 7/7. In terms of biological role, catalyzes the anti-1,4-elimination of the C-3 phosphate and the C-6 proR hydrogen from 5-enolpyruvylshikimate-3-phosphate (EPSP) to yield chorismate, which is the branch point compound that serves as the starting substrate for the three terminal pathways of aromatic amino acid biosynthesis. This reaction introduces a second double bond into the aromatic ring system. The sequence is that of Chorismate synthase from Streptococcus pyogenes serotype M1.